The sequence spans 149 residues: Thioredoxin-like protein 4B (149 aa).

Belongs to the DIM1 family. Homodimer. Interacts with the U5-102 kDa protein subunit of the spliceosome.

It is found in the nucleus. Essential role in pre-mRNA splicing. Required in cell cycle progression for S/G(2) transition. The polypeptide is Thioredoxin-like protein 4B (Txnl4b) (Mus musculus (Mouse)).